Consider the following 436-residue polypeptide: Eukaryotic translation initiation factor 4B (436 aa).

The tract at residues 56-98 is disordered; the sequence is AKNNSNNTRSGGFGGSFGGRSRLDPALGGGSSDRREEYPVPDA. Phosphoserine occurs at positions 65 and 71. The 83-residue stretch at 101–183 folds into the RRM domain; the sequence is YRAVINNIPW…RTVYVSVAAP (83 aa). The disordered stretch occupies residues 185–406; the sequence is RGGGADVDWS…EKQNGDAKEN (222 aa). The 1; approximate repeat unit spans residues 190 to 210; it reads DVDWSSARGSNFQGDGREDAP. The interval 190–350 is 7 X approximate tandem repeats; it reads DVDWSSARGS…DWGAARGAQF (161 aa). Tandem repeats lie at residues 211–232, 233–258, 259–284, 285–310, and 311–340. Over residues 329-338 the composition is skewed to basic and acidic residues; the sequence is PRREREKEEP. The 7; truncated repeat unit spans residues 341-350; sequence DWGAARGAQF. 2 stretches are compositionally biased toward basic and acidic residues: residues 359 to 376 and 397 to 406; these read TYKDRSLTNKKTTDEQPK and EKQNGDAKEN.

In terms of biological role, involved in translation initiation. May be the homolog of mammalian eIF4B and be part of an RNA helicase. STM1/TIF3 is a non-essential gene. The sequence is that of Eukaryotic translation initiation factor 4B (TIF3) from Saccharomyces cerevisiae (strain ATCC 204508 / S288c) (Baker's yeast).